The sequence spans 429 residues: Protein ORF66 (429 aa).

Belongs to the herpesviridae UL49 family. As to quaternary structure, interacts with ORF34.

Its subcellular location is the host nucleus. It localises to the host cytoplasm. In terms of biological role, participates in the expression of late viral mRNAs. The polypeptide is Protein ORF66 (ORF66) (Homo sapiens (Human)).